A 146-amino-acid chain; its full sequence is Acidic phospholipase A2 S5-32M (146 aa).

A signal peptide spans 1 to 19 (MYPAHLLVLLAVCVSLLGA). A propeptide spanning residues 20 to 27 (ASIPPQPL) is cleaved from the precursor. Cystine bridges form between C38-C98, C54-C145, C56-C72, C71-C126, C78-C119, C87-C112, and C105-C117. The Ca(2+) site is built by Y55, G57, and G59. H75 is a catalytic residue. D76 serves as a coordination point for Ca(2+). D120 is a catalytic residue.

It belongs to the phospholipase A2 family. Group I subfamily. D49 sub-subfamily. Ca(2+) is required as a cofactor. As to expression, expressed by the venom gland.

It is found in the secreted. It catalyses the reaction a 1,2-diacyl-sn-glycero-3-phosphocholine + H2O = a 1-acyl-sn-glycero-3-phosphocholine + a fatty acid + H(+). In terms of biological role, snake venom phospholipase A2 (PLA2) that inhibits collagen-induced platelet aggregation. PLA2 catalyzes the calcium-dependent hydrolysis of the 2-acyl groups in 3-sn-phosphoglycerides. This chain is Acidic phospholipase A2 S5-32M, found in Austrelaps superbus (Lowland copperhead snake).